The following is a 153-amino-acid chain: Histone deacetylase complex subunit SAP18 (153 aa).

The interval 1–20 (MAVESRVTQEEIKKEPEKPI) is disordered. Position 2 is an N-acetylalanine (Ala-2). A compositionally biased stretch (basic and acidic residues) spans 7 to 20 (VTQEEIKKEPEKPI). Lys-13 participates in a covalent cross-link: Glycyl lysine isopeptide (Lys-Gly) (interchain with G-Cter in SUMO2). An involved in splicing regulation activity region spans residues 93-153 (FTDVKRPGYR…PPPSGRMRPY (61 aa)).

Belongs to the SAP18 family. As to quaternary structure, found in a mRNA splicing-dependent exon junction complex (EJC). Component of the heterotrimeric ASAP (apoptosis- and splicing-associated protein) and PSAP complexes consisting of RNPS1, SAP18 and either ACIN1 or PNN, respectively; the ASAP and PSAP complexes probably are formed mutually exclusive. For the ASAP complex, the association of SAP18 seems to require a preformed RNPS1:ACIN1 complex. Forms a complex with SIN3A and HDAC1. Interacts with SUFU. As to expression, ubiquitous.

Its subcellular location is the nucleus. The protein localises to the cytoplasm. It is found in the nucleus speckle. Its function is as follows. Component of the SIN3-repressing complex. Enhances the ability of SIN3-HDAC1-mediated transcriptional repression. When tethered to the promoter, it can direct the formation of a repressive complex to core histone proteins. Auxiliary component of the splicing-dependent multiprotein exon junction complex (EJC) deposited at splice junction on mRNAs. The EJC is a dynamic structure consisting of core proteins and several peripheral nuclear and cytoplasmic associated factors that join the complex only transiently either during EJC assembly or during subsequent mRNA metabolism. Component of the ASAP and PSAP complexes which bind RNA in a sequence-independent manner and are proposed to be recruited to the EJC prior to or during the splicing process and to regulate specific excision of introns in specific transcription subsets. The ASAP complex can inhibit mRNA processing during in vitro splicing reactions. The ASAP complex promotes apoptosis and is disassembled after induction of apoptosis. Involved in the splicing modulation of BCL2L1/Bcl-X (and probably other apoptotic genes); specifically inhibits the formation of proapoptotic isoforms such as Bcl-X(S); the activity is different from the established EJC assembly and function. This is Histone deacetylase complex subunit SAP18 (SAP18) from Homo sapiens (Human).